The chain runs to 132 residues: Fatty acid-binding protein, adipocyte (132 aa).

A Nuclear localization signal motif is present at residues 22-32 (KELGVGFATRK). Residues Arg107 and Arg127 each contribute to the (9Z,12Z)-octadecadienoate site.

This sequence belongs to the calycin superfamily. Fatty-acid binding protein (FABP) family. Monomer.

It is found in the cytoplasm. It localises to the nucleus. Its function is as follows. Lipid transport protein in adipocytes. Binds both long chain fatty acids and retinoic acid. Delivers long-chain fatty acids and retinoic acid to their cognate receptors in the nucleus. Has the highest binding affinity for linoleic acid and decreasing relative affinity for eicosapentaenoic acid (EPA), alpha-linolenic acid (ALA), docosahexaenoic acid (DHA), oleic acid, palmitic acid and stearic acid, respectively. The sequence is that of Fatty acid-binding protein, adipocyte from Pygoscelis papua (Gentoo penguin).